Here is a 209-residue protein sequence, read N- to C-terminus: Kynurenine formamidase (209 aa).

Tryptophan 19 provides a ligand contact to substrate. Residues histidine 49, histidine 53, and aspartate 55 each contribute to the Zn(2+) site. The Proton donor/acceptor role is filled by histidine 59. Zn(2+) is bound by residues histidine 160 and glutamate 172.

It belongs to the Cyclase 1 superfamily. KynB family. Homodimer. Zn(2+) serves as cofactor.

It catalyses the reaction N-formyl-L-kynurenine + H2O = L-kynurenine + formate + H(+). It participates in amino-acid degradation; L-tryptophan degradation via kynurenine pathway; L-kynurenine from L-tryptophan: step 2/2. Catalyzes the hydrolysis of N-formyl-L-kynurenine to L-kynurenine, the second step in the kynurenine pathway of tryptophan degradation. The chain is Kynurenine formamidase from Ralstonia nicotianae (strain ATCC BAA-1114 / GMI1000) (Ralstonia solanacearum).